The primary structure comprises 237 residues: MHPTAIAPGLIIQGFAPPLRLSDFKLIAFDMDSTLINIECVDEIADAVGRKREVAAITEAAMRGEITDYKESLRQRVALLQGVTEVQMNQIYQERMQFNPGAAELVAACKAAGLKVLLVSGGFTHFTDRVAQRLGIDYTRSNVLQIENGVLTGRMVDQPWGDICDGAEKRKMLLETCALLGIAPKQAIAVGDGANDLPMMREAGLSVAFHAKSAVRELANVSIESGGLDRLLELFQP.

Asp-30 acts as the Nucleophile in catalysis. Positions 30 and 32 each coordinate Mg(2+). Residue Asp-32 is the Proton donor of the active site. Substrate contacts are provided by residues Glu-39, Arg-76, 120 to 121, and Lys-169; that span reads SG. Residue Asp-192 participates in Mg(2+) binding. Residue Asn-195 participates in substrate binding.

This sequence belongs to the HAD-like hydrolase superfamily. SerB family. Requires Mg(2+) as cofactor.

It catalyses the reaction O-phospho-L-serine + H2O = L-serine + phosphate. It carries out the reaction O-phospho-D-serine + H2O = D-serine + phosphate. It participates in amino-acid biosynthesis; L-serine biosynthesis; L-serine from 3-phospho-D-glycerate: step 3/3. Functionally, catalyzes the dephosphorylation of phosphoserine (P-Ser) in vitro. Also catalyzes the dephosphorylation of phosphothreonine (P-Thr) in vitro. In Albidiferax ferrireducens (strain ATCC BAA-621 / DSM 15236 / T118) (Rhodoferax ferrireducens), this protein is Phosphoserine phosphatase.